The primary structure comprises 374 residues: MSTAGKVIKCKAAVLWEQKKPFSIEEVEVAPPKAHEVRIKMVAAGICRSDDHVVSGTLVAPLPVIAGHEAAGIVESIGEGVTTVRPGDKVIPLFIPQCGKCSVCKHPEGNLCLKNLSMPRGTMQDGTSRFTCRGKPIHHFLGTSTFSQYTVVDEISVAKIDAASPLEKVCLVGCGFSTGYGSAVKVAKVTQGSTCAVFGLGGVGLSVIMGCKAAGAARIIGVDINKDKFAKAKEVGATECVNPQDYKKPIQEVLTEMSNGGVDFSFEVIGRLDTMVAALSCCQEAYGVSVIVGVPPDSQNLSMNPMLLLSGRTWKGAIFGGFKSKDSVPKLVADFMAKKFALDPLITHVLPFEKINEGFDLLRSGKSIRTILTF.

Position 2 is an N-acetylserine (S2). C47, H68, C98, C101, C104, C112, and C174 together coordinate Zn(2+). NAD(+) is bound by residues 199–204 (GLGGVG), D223, K228, 292–294 (VGV), and R369.

The protein belongs to the zinc-containing alcohol dehydrogenase family. Class-I subfamily. In terms of assembly, dimer of identical or non-identical chains of two types (E and S) coded by 2 separate genes at different loci. Zn(2+) is required as a cofactor.

It is found in the cytoplasm. The enzyme catalyses a primary alcohol + NAD(+) = an aldehyde + NADH + H(+). The catalysed reaction is a secondary alcohol + NAD(+) = a ketone + NADH + H(+). In Equus caballus (Horse), this protein is Alcohol dehydrogenase S chain.